The primary structure comprises 772 residues: Cadherin-19 (772 aa).

Residues 1-21 form the signal peptide; it reads MNCYLLLRFMLGIPLLWPCLG. The propeptide occupies 22–43; it reads ATENSQTKKVKQPVRSHLRVKR. Cadherin domains are found at residues 44–148, 149–256, 257–370, 371–470, and 470–581; these read GWVW…EPKF, LDEP…KPIF, KESL…PPLF, LLPY…APEF, and FSQY…STQT. Residues 44–596 are Extracellular-facing; it reads GWVWNQFFVP…LVLSMGFKTE (553 aa). N57 and N74 each carry an N-linked (GlcNAc...) asparagine glycan. 6 N-linked (GlcNAc...) asparagine glycosylation sites follow: N419, N437, N508, N515, N516, and N534. A helical membrane pass occupies residues 597–617; it reads VIIAILICIMIIFGFIFLTLG. Residues 618 to 772 are Cytoplasmic-facing; it reads LKQRRKQILF…MFGSAVQSNN (155 aa).

Expressed in many tissues, with the exception of uterus.

Its subcellular location is the cell membrane. In terms of biological role, cadherins are calcium-dependent cell adhesion proteins. They preferentially interact with themselves in a homophilic manner in connecting cells; cadherins may thus contribute to the sorting of heterogeneous cell types. The sequence is that of Cadherin-19 (CDH19) from Homo sapiens (Human).